We begin with the raw amino-acid sequence, 762 residues long: 5-methyltetrahydropteroyltriglutamate--homocysteine methyltransferase (762 aa).

5-methyltetrahydropteroyltri-L-glutamate contacts are provided by residues 17 to 20 (REWK) and lysine 111. Residues 435 to 437 (IGS) and glutamate 488 each bind L-homocysteine. L-methionine contacts are provided by residues 435–437 (IGS) and glutamate 488. Residues 519–520 (RC) and tryptophan 565 contribute to the 5-methyltetrahydropteroyltri-L-glutamate site. Aspartate 603 contacts L-homocysteine. Position 603 (aspartate 603) interacts with L-methionine. Residue glutamate 609 participates in 5-methyltetrahydropteroyltri-L-glutamate binding. Zn(2+) contacts are provided by histidine 645, cysteine 647, and glutamate 669. Histidine 698 serves as the catalytic Proton donor. Cysteine 730 is a Zn(2+) binding site.

This sequence belongs to the vitamin-B12 independent methionine synthase family. Zn(2+) is required as a cofactor.

The catalysed reaction is 5-methyltetrahydropteroyltri-L-glutamate + L-homocysteine = tetrahydropteroyltri-L-glutamate + L-methionine. Its pathway is amino-acid biosynthesis; L-methionine biosynthesis via de novo pathway; L-methionine from L-homocysteine (MetE route): step 1/1. Catalyzes the transfer of a methyl group from 5-methyltetrahydrofolate to homocysteine resulting in methionine formation. This is 5-methyltetrahydropteroyltriglutamate--homocysteine methyltransferase from Bacillus cereus (strain AH187).